The sequence spans 198 residues: Recombination protein RecR (198 aa).

The C4-type zinc-finger motif lies at 57–72 (CSVCGHITDKDPCYIC). Residues 80-175 (SVLCVVQESK…KVTRIAHGLP (96 aa)) enclose the Toprim domain.

It belongs to the RecR family.

In terms of biological role, may play a role in DNA repair. It seems to be involved in an RecBC-independent recombinational process of DNA repair. It may act with RecF and RecO. The protein is Recombination protein RecR of Listeria innocua serovar 6a (strain ATCC BAA-680 / CLIP 11262).